The primary structure comprises 166 residues: NAD(P)H-quinone oxidoreductase subunit I, chloroplastic (166 aa).

4Fe-4S ferredoxin-type domains are found at residues glycine 55–lysine 84 and leucine 95–glutamate 124. Residues cysteine 64, cysteine 67, cysteine 70, cysteine 74, cysteine 104, cysteine 107, cysteine 110, and cysteine 114 each contribute to the [4Fe-4S] cluster site.

This sequence belongs to the complex I 23 kDa subunit family. NDH is composed of at least 16 different subunits, 5 of which are encoded in the nucleus. Requires [4Fe-4S] cluster as cofactor.

It localises to the plastid. The protein resides in the chloroplast thylakoid membrane. The catalysed reaction is a plastoquinone + NADH + (n+1) H(+)(in) = a plastoquinol + NAD(+) + n H(+)(out). It carries out the reaction a plastoquinone + NADPH + (n+1) H(+)(in) = a plastoquinol + NADP(+) + n H(+)(out). In terms of biological role, NDH shuttles electrons from NAD(P)H:plastoquinone, via FMN and iron-sulfur (Fe-S) centers, to quinones in the photosynthetic chain and possibly in a chloroplast respiratory chain. The immediate electron acceptor for the enzyme in this species is believed to be plastoquinone. Couples the redox reaction to proton translocation, and thus conserves the redox energy in a proton gradient. This is NAD(P)H-quinone oxidoreductase subunit I, chloroplastic from Bahiopsis tomentosa (Tecote).